The following is a 629-amino-acid chain: uncharacterized protein (629 aa).

At Met1 the chain carries N-acetylmethionine. Positions Val308–Ala395 are disordered. A compositionally biased stretch (polar residues) spans Ser322–Ser334. The VWFA domain occupies Leu451–Val587.

It belongs to the Mg-chelatase subunits D/I family.

This is an uncharacterized protein from Mycobacterium tuberculosis (strain ATCC 25618 / H37Rv).